Reading from the N-terminus, the 250-residue chain is PF03932 family protein CutC (250 aa).

It belongs to the CutC family.

The protein localises to the cytoplasm. This Vibrio vulnificus (strain YJ016) protein is PF03932 family protein CutC.